A 1026-amino-acid polypeptide reads, in one-letter code: Multidrug resistance protein MdtC (1026 aa).

The next 11 helical transmembrane spans lie at 15-35 (ILIA…LPVA), 333-353 (EVEE…FLFL), 360-380 (LIPA…MYLC), 387-407 (LSLM…IVVL), 431-451 (VGFT…PLLL), 463-483 (FAVT…TLTP), 528-548 (LVGV…IAIP), 853-873 (LILI…LYES), 897-917 (LFNA…IGIV), 953-973 (PIMM…LSGG), and 984-1004 (ITIV…TPVV).

It belongs to the resistance-nodulation-cell division (RND) (TC 2.A.6) family. MdtC subfamily. In terms of assembly, part of a tripartite efflux system composed of MdtA, MdtB and MdtC. MdtC forms a heteromultimer with MdtB.

The protein localises to the cell inner membrane. The protein is Multidrug resistance protein MdtC of Salmonella paratyphi A (strain ATCC 9150 / SARB42).